Reading from the N-terminus, the 499-residue chain is Probable cytosol aminopeptidase (499 aa).

Residues K269 and D274 each contribute to the Mn(2+) site. K281 is a catalytic residue. Mn(2+) is bound by residues D292, D351, and E353. R355 is an active-site residue.

It belongs to the peptidase M17 family. The cofactor is Mn(2+).

Its subcellular location is the cytoplasm. The catalysed reaction is Release of an N-terminal amino acid, Xaa-|-Yaa-, in which Xaa is preferably Leu, but may be other amino acids including Pro although not Arg or Lys, and Yaa may be Pro. Amino acid amides and methyl esters are also readily hydrolyzed, but rates on arylamides are exceedingly low.. The enzyme catalyses Release of an N-terminal amino acid, preferentially leucine, but not glutamic or aspartic acids.. Functionally, presumably involved in the processing and regular turnover of intracellular proteins. Catalyzes the removal of unsubstituted N-terminal amino acids from various peptides. This is Probable cytosol aminopeptidase from Haemophilus ducreyi (strain 35000HP / ATCC 700724).